We begin with the raw amino-acid sequence, 597 residues long: Tubulin polyglutamylase ttll-4 (597 aa).

Over residues Met-1–Ala-18 the composition is skewed to polar residues. 2 disordered regions span residues Met-1–Arg-39 and Ser-80–Ser-107. Residues Tyr-26–Ser-35 are compositionally biased toward acidic residues. Residues Gln-134 to His-472 form the TTL domain. ATP is bound by residues Lys-250, Arg-256–Gly-257, Gln-278–Ile-281, and Lys-291–Asp-293. Arg-256 is an a protein binding site. Arg-317 serves as a coordination point for L-glutamate. Thr-338–Asn-339 contacts ATP. The L-glutamate site is built by Tyr-340, Ser-341, and Lys-358. Residues Asp-418, Glu-431, and Asn-433 each contribute to the Mg(2+) site. Position 449 (Lys-449) interacts with L-glutamate.

This sequence belongs to the tubulin--tyrosine ligase family. Mg(2+) serves as cofactor.

The catalysed reaction is L-glutamyl-[protein] + L-glutamate + ATP = gamma-L-glutamyl-L-glutamyl-[protein] + ADP + phosphate + H(+). Its function is as follows. Monoglutamylase which modifies tubulin, adding a single glutamate on the gamma-carboxyl group of specific glutamate residues of target proteins. Involved in the side-chain initiation step of the polyglutamylation reaction but not in the elongation step. Preferentially modifies beta-tail tubulin over the alpha-tubulin. Involved in side-chain glutamylation of tubulin in sensory cilia. Together with ttll-5 and ttll-11, required for male mating. This is Tubulin polyglutamylase ttll-4 (ttll-4) from Caenorhabditis briggsae.